The sequence spans 146 residues: Large-conductance mechanosensitive channel (146 aa).

The next 2 helical transmembrane spans lie at 15–35 and 81–101; these read VSLA…TSLV and GIFI…FIII.

The protein belongs to the MscL family. As to quaternary structure, homopentamer.

It localises to the cell membrane. Its function is as follows. Channel that opens in response to stretch forces in the membrane lipid bilayer. May participate in the regulation of osmotic pressure changes within the cell. This is Large-conductance mechanosensitive channel from Clostridium beijerinckii (strain ATCC 51743 / NCIMB 8052) (Clostridium acetobutylicum).